We begin with the raw amino-acid sequence, 546 residues long: Chaperonin GroEL (546 aa).

Residues T29–P32, K50, D86–T90, G414, and D494 each bind ATP. Residues K525–M546 form a disordered region. A compositionally biased stretch (gly residues) spans D537–M546.

Belongs to the chaperonin (HSP60) family. As to quaternary structure, forms a cylinder of 14 subunits composed of two heptameric rings stacked back-to-back. Interacts with the co-chaperonin GroES.

It localises to the cytoplasm. The enzyme catalyses ATP + H2O + a folded polypeptide = ADP + phosphate + an unfolded polypeptide.. Functionally, together with its co-chaperonin GroES, plays an essential role in assisting protein folding. The GroEL-GroES system forms a nano-cage that allows encapsulation of the non-native substrate proteins and provides a physical environment optimized to promote and accelerate protein folding. This Bdellovibrio bacteriovorus (strain ATCC 15356 / DSM 50701 / NCIMB 9529 / HD100) protein is Chaperonin GroEL.